The primary structure comprises 421 residues: UDP-N-acetylglucosamine 1-carboxyvinyltransferase (421 aa).

22–23 (KN) is a binding site for phosphoenolpyruvate. Arg-95 serves as a coordination point for UDP-N-acetyl-alpha-D-glucosamine. The active-site Proton donor is the Cys-119. Cys-119 bears the 2-(S-cysteinyl)pyruvic acid O-phosphothioketal mark. Residues 124-128 (RPVDQ), Asp-309, and Ile-331 each bind UDP-N-acetyl-alpha-D-glucosamine.

Belongs to the EPSP synthase family. MurA subfamily.

The protein localises to the cytoplasm. It catalyses the reaction phosphoenolpyruvate + UDP-N-acetyl-alpha-D-glucosamine = UDP-N-acetyl-3-O-(1-carboxyvinyl)-alpha-D-glucosamine + phosphate. The protein operates within cell wall biogenesis; peptidoglycan biosynthesis. Its function is as follows. Cell wall formation. Adds enolpyruvyl to UDP-N-acetylglucosamine. The polypeptide is UDP-N-acetylglucosamine 1-carboxyvinyltransferase (Leptothrix cholodnii (strain ATCC 51168 / LMG 8142 / SP-6) (Leptothrix discophora (strain SP-6))).